The chain runs to 106 residues: UPF0473 protein LCABL_08490 (106 aa).

Belongs to the UPF0473 family.

This chain is UPF0473 protein LCABL_08490, found in Lacticaseibacillus casei (strain BL23) (Lactobacillus casei).